Here is a 332-residue protein sequence, read N- to C-terminus: Adenine deaminase (332 aa).

The Zn(2+) site is built by His-14, His-16, and His-194. The Proton donor role is filled by Glu-197. Asp-275 serves as a coordination point for Zn(2+). Substrate is bound at residue Asp-276.

This sequence belongs to the metallo-dependent hydrolases superfamily. Adenosine and AMP deaminases family. Adenine deaminase type 2 subfamily. It depends on Zn(2+) as a cofactor.

The catalysed reaction is adenine + H2O + H(+) = hypoxanthine + NH4(+). Functionally, catalyzes the hydrolytic deamination of adenine to hypoxanthine. Plays an important role in the purine salvage pathway and in nitrogen catabolism. The polypeptide is Adenine deaminase (Psychrobacter cryohalolentis (strain ATCC BAA-1226 / DSM 17306 / VKM B-2378 / K5)).